The following is a 60-amino-acid chain: Short neurotoxin C (60 aa).

Cystine bridges form between C3/C22, C17/C39, C41/C52, and C53/C58.

This sequence belongs to the three-finger toxin family. Short-chain subfamily. Type I alpha-neurotoxin sub-subfamily. Expressed by the venom gland.

Its subcellular location is the secreted. Binds to muscle nicotinic acetylcholine receptor (nAChR) and inhibit acetylcholine from binding to the receptor, thereby impairing neuromuscular transmission. The protein is Short neurotoxin C of Aipysurus laevis (Olive sea snake).